Here is a 380-residue protein sequence, read N- to C-terminus: Cytochrome b (380 aa).

A run of 4 helical transmembrane segments spans residues 33–53 (FGSLLGLCLASQILTGLFLAM), 77–98 (WLIRNMHANGASFFFICLYLHI), 113–133 (WNVGVVLLLLVMMTAFVGYVL), and 178–198 (FFAFHFLFPFVILAAAVLHLL). Residues His-83 and His-97 each coordinate heme b. His-182 and His-196 together coordinate heme b. His-201 is a binding site for a ubiquinone. The next 4 helical transmembrane spans lie at 226-246 (YKDLLGFAVLLMGLTSLALFS), 288-308 (LGGVLALLASILILMVVPFLH), 320-340 (ASQFLFWTLVADVVVLTWIGG), and 347-367 (FIIIGQVASVLYFSLFLVLFP).

This sequence belongs to the cytochrome b family. As to quaternary structure, the cytochrome bc1 complex contains 3 respiratory subunits (MT-CYB, CYC1 and UQCRFS1), 2 core proteins (UQCRC1 and UQCRC2) and probably 6 low-molecular weight proteins. Heme b serves as cofactor.

It is found in the mitochondrion inner membrane. In terms of biological role, component of the ubiquinol-cytochrome c reductase complex (complex III or cytochrome b-c1 complex) that is part of the mitochondrial respiratory chain. The b-c1 complex mediates electron transfer from ubiquinol to cytochrome c. Contributes to the generation of a proton gradient across the mitochondrial membrane that is then used for ATP synthesis. This is Cytochrome b (mt-cyb) from Scomber scombrus (Atlantic mackerel).